The primary structure comprises 592 residues: Putative nucleoside-triphosphatase (592 aa).

Glu-200 (proton acceptor) is an active-site residue.

It belongs to the GDA1/CD39 NTPase family.

The enzyme catalyses a ribonucleoside 5'-triphosphate + H2O = a ribonucleoside 5'-diphosphate + phosphate + H(+). This is Putative nucleoside-triphosphatase (NTP4) from Toxoplasma gondii.